Reading from the N-terminus, the 593-residue chain is Inactive metallocarboxypeptidase ECM14 (593 aa).

Residues 1 to 22 (MHVTVQLSLLLSLASSLPLVSA) form the signal peptide. Residues 23-175 (IPQHDGQAYT…QAIYESYPKN (153 aa)) constitute a propeptide that is removed on maturation. 2 disordered regions span residues 75–98 (VPQR…KAPA) and 172–202 (YPKN…SQPH). Over residues 78-88 (RGKDSETKTGK) the composition is skewed to basic and acidic residues. Polar residues predominate over residues 188–199 (RRFSPSASTPES). The Peptidase M14 domain maps to 211-537 (DYQPLSVLLP…HAVVAMGKFL (327 aa)). Residues His276 and Glu279 each coordinate Zn(2+). Residues 276 to 279 (HARE), Arg334, and 351 to 352 (DR) contribute to the substrate site. An intrachain disulfide couples Cys345 to Cys368. Asn361 is a glycosylation site (N-linked (GlcNAc...) asparagine). Residue His408 participates in Zn(2+) binding. 409–410 (SY) contacts substrate. A disordered region spans residues 548–593 (DEPHAGEQTQDNSYDEDGDNLFRAQGGDPQVRFTRRNIGAHDDDSE).

Belongs to the peptidase M14 family. Requires Zn(2+) as cofactor.

Its subcellular location is the vacuole. The protein localises to the secreted. Functionally, inactive carboxypeptidase that may play a role in cell wall organization and biogenesis. This Arthroderma otae (strain ATCC MYA-4605 / CBS 113480) (Microsporum canis) protein is Inactive metallocarboxypeptidase ECM14 (ECM14).